Reading from the N-terminus, the 207-residue chain is Protein GrpE (207 aa).

The tract at residues 1–31 (MSEHQTPPEEDLTVANGDSAEAVSEPDVTVA) is disordered.

This sequence belongs to the GrpE family. Homodimer.

It localises to the cytoplasm. Participates actively in the response to hyperosmotic and heat shock by preventing the aggregation of stress-denatured proteins, in association with DnaK and GrpE. It is the nucleotide exchange factor for DnaK and may function as a thermosensor. Unfolded proteins bind initially to DnaJ; upon interaction with the DnaJ-bound protein, DnaK hydrolyzes its bound ATP, resulting in the formation of a stable complex. GrpE releases ADP from DnaK; ATP binding to DnaK triggers the release of the substrate protein, thus completing the reaction cycle. Several rounds of ATP-dependent interactions between DnaJ, DnaK and GrpE are required for fully efficient folding. This chain is Protein GrpE, found in Synechococcus elongatus (strain ATCC 33912 / PCC 7942 / FACHB-805) (Anacystis nidulans R2).